Here is a 350-residue protein sequence, read N- to C-terminus: Phosphoribosylformylglycinamidine cyclo-ligase (350 aa).

The protein belongs to the AIR synthase family.

The protein localises to the cytoplasm. The enzyme catalyses 2-formamido-N(1)-(5-O-phospho-beta-D-ribosyl)acetamidine + ATP = 5-amino-1-(5-phospho-beta-D-ribosyl)imidazole + ADP + phosphate + H(+). Its pathway is purine metabolism; IMP biosynthesis via de novo pathway; 5-amino-1-(5-phospho-D-ribosyl)imidazole from N(2)-formyl-N(1)-(5-phospho-D-ribosyl)glycinamide: step 2/2. In Nitratidesulfovibrio vulgaris (strain DSM 19637 / Miyazaki F) (Desulfovibrio vulgaris), this protein is Phosphoribosylformylglycinamidine cyclo-ligase.